A 514-amino-acid chain; its full sequence is Putative thymidine phosphorylase (514 aa).

It belongs to the thymidine/pyrimidine-nucleoside phosphorylase family. Type 2 subfamily.

The catalysed reaction is thymidine + phosphate = 2-deoxy-alpha-D-ribose 1-phosphate + thymine. This Rhodopseudomonas palustris (strain ATCC BAA-98 / CGA009) protein is Putative thymidine phosphorylase.